We begin with the raw amino-acid sequence, 372 residues long: NAD(P)H-quinone oxidoreductase subunit 1 (372 aa).

9 helical membrane-spanning segments follow: residues 27–47 (AIWMPLPMILMLIGATVGVLV), 65–85 (PEYIGPLGLLAPVADGLKLVF), 97–117 (WLFTLGPILVVLPVFLSYLIV), 128–148 (IGTGIFLWIALSSIQPIGLLM), 166–186 (AAQSISYEIPLALSVLAIVMM), 204–224 (ILGWNIWRQPLGFLIFWIAAL), 266–286 (VLSALLVAVLYLGGWDFPIPI), 308–328 (ALGITMTLVKAYFLVFIAILL), and 347–367 (FLLPVGLVNLLLTAALKLAFP).

It belongs to the complex I subunit 1 family. In terms of assembly, NDH-1 is composed of at least 11 different subunits.

It localises to the cellular thylakoid membrane. It catalyses the reaction a plastoquinone + NADH + (n+1) H(+)(in) = a plastoquinol + NAD(+) + n H(+)(out). It carries out the reaction a plastoquinone + NADPH + (n+1) H(+)(in) = a plastoquinol + NADP(+) + n H(+)(out). In terms of biological role, NDH-1 shuttles electrons from an unknown electron donor, via FMN and iron-sulfur (Fe-S) centers, to quinones in the respiratory and/or the photosynthetic chain. The immediate electron acceptor for the enzyme in this species is believed to be plastoquinone. Couples the redox reaction to proton translocation, and thus conserves the redox energy in a proton gradient. In Trichormus variabilis (strain ATCC 29413 / PCC 7937) (Anabaena variabilis), this protein is NAD(P)H-quinone oxidoreductase subunit 1.